The following is a 412-amino-acid chain: Argininosuccinate synthase (412 aa).

Residues 10–18 (AYSGGLDTS) and Ala-36 contribute to the ATP site. Tyr-87 and Ser-92 together coordinate L-citrulline. 115–123 (SHGATGKGN) serves as a coordination point for ATP. Positions 119, 123, and 124 each coordinate L-aspartate. Asn-123 is a binding site for L-citrulline. L-citrulline is bound by residues Arg-127, Ser-180, Ser-189, Glu-270, and Tyr-282.

It belongs to the argininosuccinate synthase family. In terms of assembly, homotetramer.

It carries out the reaction L-citrulline + L-aspartate + ATP = 2-(N(omega)-L-arginino)succinate + AMP + diphosphate + H(+). Its pathway is amino-acid biosynthesis; L-arginine biosynthesis; L-arginine from L-ornithine and carbamoyl phosphate: step 2/3. The protein operates within nitrogen metabolism; urea cycle; (N(omega)-L-arginino)succinate from L-aspartate and L-citrulline: step 1/1. The sequence is that of Argininosuccinate synthase from Aedes aegypti (Yellowfever mosquito).